The chain runs to 633 residues: GRAM domain-containing protein 4 (633 aa).

Disordered stretches follow at residues 1–46 (MGIA…VRPR), 72–109 (LAES…AGPG), and 182–216 (VLKA…RSQG). The span at 27 to 39 (PWDKGLSGREPPR) shows a compositional bias: basic and acidic residues. A phosphoserine mark is found at Ser-75 and Ser-79. Over residues 95-104 (SPRDSEELRD) the composition is skewed to basic and acidic residues. Residues 134–190 (HLEIALLEKHFLQEELRKLREETNSEMLRQELDRERQRRIELEQKMQEVLKARSEEQ) are a coiled coil. The segment covering 190–205 (QPAQPQQPPKGQSQAS) has biased composition (low complexity). 3 consecutive transmembrane segments (helical) span residues 295 to 315 (VYMN…LAIL), 389 to 409 (TTQK…FFPY), and 411 to 431 (LVGL…DFIF). The 79-residue stretch at 500 to 578 (GNFHEIFNLT…MDITDIQKYK (79 aa)) folds into the GRAM domain.

As to quaternary structure, interacts with RTN4 (isoform B).

It localises to the mitochondrion membrane. Its subcellular location is the endoplasmic reticulum membrane. Functionally, plays a role as a mediator of E2F1-induced apoptosis in the absence of p53/TP53. Inhibits TLR9 response to nucelic acids and regulates TLR9-mediated innate immune response. The chain is GRAM domain-containing protein 4 from Mus musculus (Mouse).